The primary structure comprises 833 residues: A disintegrin and metalloproteinase with thrombospondin motifs 4 (833 aa).

The first 49 residues, 1-49, serve as a signal peptide directing secretion; that stretch reads MSQMGLHPRRGLTGHWLQRFQPCLPLHTVQWRRLLLLAFLLSLAWPASP. The propeptide occupies 50–208; sequence LPREEEIVFP…PSPISRRTKR (159 aa). Asn63 is a glycosylation site (N-linked (GlcNAc...) asparagine). The tract at residues 180–204 is disordered; it reads KSPASSQGPMCTVKAPSGSPSPISR. Positions 188-195 match the Cysteine switch motif; that stretch reads PMCTVKAP. Cys190 contributes to the Zn(2+) binding site. The Peptidase M12B domain occupies 214–424; that stretch reads RFVETLVVAD…GYGHCLLDKP (211 aa). 11 disulfide bridges follow: Cys289–Cys341, Cys318–Cys323, Cys335–Cys419, Cys373–Cys403, Cys445–Cys468, Cys456–Cys478, Cys463–Cys497, Cys491–Cys502, Cys528–Cys565, Cys532–Cys570, and Cys543–Cys555. N-linked (GlcNAc...) asparagine glycosylation is present at Asn299. His357 contacts Zn(2+). Glu358 is an active-site residue. Residues His361 and His367 each contribute to the Zn(2+) site. Positions 433–515 constitute a Disintegrin domain; the sequence is TFPGKDYDAD…DQLKDFNVPQ (83 aa). Residues 516–571 form the TSP type-1 domain; it reads AGGWGPWGPWGDCSRTCGGGVQFSSRDCTRPVPRNGGKYCEGRRTRFRSCNTENCP. The interval 682-833 is spacer; it reads SKQSGSFKKF…LRKRPWAGRK (152 aa).

Interacts with SRPX2. It depends on Zn(2+) as a cofactor. The precursor is cleaved by a furin endopeptidase. In terms of processing, glycosylated. Can be O-fucosylated by POFUT2 on a serine or a threonine residue found within the consensus sequence C1-X(2)-(S/T)-C2-G of the TSP type-1 repeat domains where C1 and C2 are the first and second cysteine residue of the repeat, respectively. Fucosylated repeats can then be further glycosylated by the addition of a beta-1,3-glucose residue by the glucosyltransferase, B3GALTL. Fucosylation mediates the efficient secretion of ADAMTS family members. Can also be C-glycosylated with one or two mannose molecules on tryptophan residues within the consensus sequence W-X-X-W of the TPRs, and N-glycosylated. These other glycosylations can also facilitate secretion.

Its subcellular location is the secreted. The protein localises to the extracellular space. It localises to the extracellular matrix. It carries out the reaction Glutamyl endopeptidase. Bonds cleaved include 370-Thr-Glu-Gly-Glu-|-Ala-Arg-Gly-Ser-377 in the interglobular domain of mammalian aggrecan.. In terms of biological role, cleaves aggrecan, a cartilage proteoglycan, at the '392-Glu-|-Ala-393' site and may be involved in its turnover. Also cleaves COMP. May play an important role in the destruction of aggrecan in arthritic diseases. In Mus musculus (Mouse), this protein is A disintegrin and metalloproteinase with thrombospondin motifs 4 (Adamts4).